We begin with the raw amino-acid sequence, 522 residues long: 4-chlorobenzoate--CoA ligase (522 aa).

ATP-binding positions include 161 to 169, 300 to 305, and asparagine 410; these read TSGTTGLPK and DIYGTT.

It belongs to the ATP-dependent AMP-binding enzyme family. Homodimer. Mg(2+) is required as a cofactor.

The enzyme catalyses 4-chlorobenzoate + ATP + CoA = 4-chlorobenzoyl-CoA + AMP + diphosphate. Its pathway is xenobiotic degradation; 4-chlorobenzoate degradation; 4-hydroxybenzoate from 4-chlorobenzoate: step 2/3. Catalyzes the formation of chlorobenzoyl-CoA via a 2 step reaction. First 4-chlorobenzoate is adenylated by ATP, followed by acyl transfer from the 4-chlorobenzoyl-AMP intermediate to CoA. Benzoate, 4-bromobenzoate, 4-iodobenzoate and 4-fluorobenzoate also act as substrates. Inactive towards 4-nitrobenzoate. The sequence is that of 4-chlorobenzoate--CoA ligase from Arthrobacter sp.